A 427-amino-acid polypeptide reads, in one-letter code: Enolase (427 aa).

A (2R)-2-phosphoglycerate-binding site is contributed by Gln163. Catalysis depends on Glu205, which acts as the Proton donor. Mg(2+)-binding residues include Asp242, Glu285, and Asp312. The (2R)-2-phosphoglycerate site is built by Lys337, Arg366, Ser367, and Lys388. The active-site Proton acceptor is the Lys337.

The protein belongs to the enolase family. The cofactor is Mg(2+).

It is found in the cytoplasm. The protein resides in the secreted. The protein localises to the cell surface. The enzyme catalyses (2R)-2-phosphoglycerate = phosphoenolpyruvate + H2O. Its pathway is carbohydrate degradation; glycolysis; pyruvate from D-glyceraldehyde 3-phosphate: step 4/5. Catalyzes the reversible conversion of 2-phosphoglycerate (2-PG) into phosphoenolpyruvate (PEP). It is essential for the degradation of carbohydrates via glycolysis. The sequence is that of Enolase from Bradyrhizobium sp. (strain BTAi1 / ATCC BAA-1182).